Here is a 142-residue protein sequence, read N- to C-terminus: Hemoglobin subunit epsilon (142 aa).

In terms of domain architecture, Globin spans 3–142; sequence HFTAEEKAAI…KLVSAVAIAL (140 aa). Phosphoserine is present on residues Ser14 and Ser51. Positions 64 and 93 each coordinate heme b.

It belongs to the globin family. In terms of assembly, heterotetramer of two alpha chains and two epsilon chains in early embryonic hemoglobin Gower-2; two zeta chains and two epsilon chains in early embryonic hemoglobin Gower-1. Red blood cells.

The epsilon chain is a beta-type chain of early mammalian embryonic hemoglobin. The polypeptide is Hemoglobin subunit epsilon (HBE1) (Callithrix geoffroyi (Geoffroy's marmoset)).